The following is a 357-amino-acid chain: DNA primase small subunit PriS (357 aa).

Catalysis depends on residues Asp105, Asp107, and Asp259.

Belongs to the eukaryotic-type primase small subunit family. As to quaternary structure, heterodimer of a small subunit (PriS) and a large subunit (PriL). Mg(2+) serves as cofactor. Mn(2+) is required as a cofactor.

Catalytic subunit of DNA primase, an RNA polymerase that catalyzes the synthesis of short RNA molecules used as primers for DNA polymerase during DNA replication. The small subunit contains the primase catalytic core and has DNA synthesis activity on its own. Binding to the large subunit stabilizes and modulates the activity, increasing the rate of DNA synthesis while decreasing the length of the DNA fragments, and conferring RNA synthesis capability. The DNA polymerase activity may enable DNA primase to also catalyze primer extension after primer synthesis. May also play a role in DNA repair. This chain is DNA primase small subunit PriS, found in Methanococcus maripaludis (strain C5 / ATCC BAA-1333).